The sequence spans 310 residues: Uracil phosphoribosyltransferase homolog (310 aa).

2 disordered regions span residues 1 to 27 (MASELQRPDSMPCHNRQVNSTSSPSPE) and 62 to 89 (SERDSPACCSTNLHSENHSDSSDSGNYD). Positions 16–25 (RQVNSTSSPS) are enriched in polar residues. S25 carries the phosphoserine modification. Residues R134, R143, and 177-180 (EKGN) contribute to the GTP site. Position 187 (R187) interacts with 5-phospho-alpha-D-ribose 1-diphosphate. Residues R204 and R233 each contribute to the GTP site. 239 to 247 (YPILSTGNT) serves as a coordination point for 5-phospho-alpha-D-ribose 1-diphosphate. A uracil-binding site is contributed by 300–302 (THF).

This sequence belongs to the UPRTase family.

The protein localises to the cytoplasm. The protein resides in the nucleus. In Mus musculus (Mouse), this protein is Uracil phosphoribosyltransferase homolog (Uprt).